The following is a 427-amino-acid chain: Glucose-6-phosphate isomerase (427 aa).

The active-site Proton donor is the Glu281. Active-site residues include His302 and Lys417.

The protein belongs to the GPI family.

The protein resides in the cytoplasm. The enzyme catalyses alpha-D-glucose 6-phosphate = beta-D-fructose 6-phosphate. It participates in carbohydrate biosynthesis; gluconeogenesis. The protein operates within carbohydrate degradation; glycolysis; D-glyceraldehyde 3-phosphate and glycerone phosphate from D-glucose: step 2/4. Its function is as follows. Catalyzes the reversible isomerization of glucose-6-phosphate to fructose-6-phosphate. The chain is Glucose-6-phosphate isomerase from Mycoplasmopsis pulmonis (strain UAB CTIP) (Mycoplasma pulmonis).